The primary structure comprises 239 residues: Geranylgeranylglyceryl phosphate synthase (239 aa).

Mg(2+) is bound by residues Asp-18 and Ser-45. Residues 166–172 (YLEAGSG), 197–198 (GG), and 219–220 (GT) each bind sn-glycerol 1-phosphate.

This sequence belongs to the GGGP/HepGP synthase family. Group II subfamily. The cofactor is Mg(2+).

The protein localises to the cytoplasm. It carries out the reaction sn-glycerol 1-phosphate + (2E,6E,10E)-geranylgeranyl diphosphate = sn-3-O-(geranylgeranyl)glycerol 1-phosphate + diphosphate. The protein operates within membrane lipid metabolism; glycerophospholipid metabolism. Its function is as follows. Prenyltransferase that catalyzes the transfer of the geranylgeranyl moiety of geranylgeranyl diphosphate (GGPP) to the C3 hydroxyl of sn-glycerol-1-phosphate (G1P). This reaction is the first ether-bond-formation step in the biosynthesis of archaeal membrane lipids. The polypeptide is Geranylgeranylglyceryl phosphate synthase (Pyrobaculum aerophilum (strain ATCC 51768 / DSM 7523 / JCM 9630 / CIP 104966 / NBRC 100827 / IM2)).